A 389-amino-acid chain; its full sequence is Dihydroorotase (389 aa).

The Zn(2+) site is built by histidine 51 and histidine 53. Substrate contacts are provided by residues 53-55 and asparagine 85; that span reads HVR. Zn(2+) contacts are provided by lysine 133, histidine 158, histidine 192, and aspartate 254. Residue lysine 133 is modified to N6-carboxylysine. The active site involves aspartate 254. Substrate-binding positions include histidine 258 and 272–273; that span reads PG.

This sequence belongs to the metallo-dependent hydrolases superfamily. DHOase family. Class I DHOase subfamily. It depends on Zn(2+) as a cofactor.

It catalyses the reaction (S)-dihydroorotate + H2O = N-carbamoyl-L-aspartate + H(+). It participates in pyrimidine metabolism; UMP biosynthesis via de novo pathway; (S)-dihydroorotate from bicarbonate: step 3/3. In terms of biological role, catalyzes the reversible cyclization of carbamoyl aspartate to dihydroorotate. This Sulfurisphaera tokodaii (strain DSM 16993 / JCM 10545 / NBRC 100140 / 7) (Sulfolobus tokodaii) protein is Dihydroorotase.